The following is a 131-amino-acid chain: Lysosomal enzyme trafficking factor (131 aa).

2 helical membrane-spanning segments follow: residues 8 to 28 (MGWI…YYVF) and 66 to 86 (LPFW…FLFL).

This sequence belongs to the LYSET family.

Its subcellular location is the golgi apparatus membrane. Required for mannose-6-phosphate-dependent trafficking of lysosomal enzymes. LYSET bridges GlcNAc-1-phosphate transferase (GNPTAB), to the membrane-bound transcription factor site-1 protease (MBTPS1), thus allowing proteolytic activation of the GNPTAB. GNPTAB is involved in the regulation of M6P-dependent Golgi-to-lysosome trafficking of lysosomal enzymes. LYSET is thus an essential factor for maturation and delivery of lysosomal hydrolases. The protein is Lysosomal enzyme trafficking factor (lyset-b) of Xenopus laevis (African clawed frog).